A 554-amino-acid polypeptide reads, in one-letter code: Malate synthase 1 (554 aa).

The active-site Proton acceptor is the arginine 177. Aspartate 457 functions as the Proton donor in the catalytic mechanism. An SKL peroxisome targeting motif motif is present at residues 552 to 554 (SKL).

The protein belongs to the malate synthase family. As to quaternary structure, interacts with PEX9.

It is found in the peroxisome matrix. It carries out the reaction glyoxylate + acetyl-CoA + H2O = (S)-malate + CoA + H(+). It participates in carbohydrate metabolism; glyoxylate cycle; (S)-malate from isocitrate: step 2/2. Malate synthase which takes part in the glyoxylate cycle. MLS1 activity is essential for cells to grow on oleic acid as a sole carbon source. Two steps of the glyoxylate cycle take place in the cytosol, the splitting of isocitrate into succinate and glyoxylate, and the dehydrogenation of malate to oxaloacetate. However, the formation of malate from glyoxylate and acetyl-CoA undertaken MLS1, occurs in the peroxisomes when cells are grown on oleic acid. The source of acetyl-CoA being either peroxisomal when breaking down fatty acids, or cytosolic when extra-cellular two-carbon substrates are used, therefore, although not strictly essential, the peroxisomal localization of MLS1 appears to be advantageous for cells growing on oleic acid, in that acetyl-CoA production and utilization are thereby intimately compartmentalized together to increase efficiency. This chain is Malate synthase 1, found in Saccharomyces cerevisiae (strain ATCC 204508 / S288c) (Baker's yeast).